We begin with the raw amino-acid sequence, 406 residues long: Probable mannan endo-1,4-beta-mannosidase C (406 aa).

Residues 1–20 (MLINFEKVLSLALLAGSVSG) form the signal peptide. The N-linked (GlcNAc...) asparagine glycan is linked to N58. W80 serves as a coordination point for substrate. Residues N86 and N114 are each glycosylated (N-linked (GlcNAc...) asparagine). Residue N201 coordinates substrate. Residue E202 is the Proton donor of the active site. Y287 lines the substrate pocket. The active-site Nucleophile is the E320. N-linked (GlcNAc...) asparagine glycosylation occurs at N338. Substrate is bound at residue W362.

The protein belongs to the glycosyl hydrolase 5 (cellulase A) family.

The protein resides in the secreted. It catalyses the reaction Random hydrolysis of (1-&gt;4)-beta-D-mannosidic linkages in mannans, galactomannans and glucomannans.. Functionally, endo-1,4-mannanase, a crucial enzyme for depolymerization of seed galactomannans and wood galactoglucomannans. This Aspergillus terreus (strain NIH 2624 / FGSC A1156) protein is Probable mannan endo-1,4-beta-mannosidase C (manC).